A 313-amino-acid polypeptide reads, in one-letter code: Ethylene-responsive transcription factor ERN2 (313 aa).

Residues 1-10 (MEIQFDEPKK) are compositionally biased toward basic and acidic residues. Residues 1 to 29 (MEIQFDEPKKSLRPKKVNKFKGRNKKSET) are disordered. A compositionally biased stretch (basic residues) spans 11–24 (SLRPKKVNKFKGRN). The segment at residues 32 to 89 (KFVGVRQRPSGRYVAEIKDTTQNIRMWLGTFETAEEAARAYDEAATLLRGSKTRTNFV) is a DNA-binding region (AP2/ERF). 2 disordered regions span residues 108–143 (NRKK…TSST) and 157–204 (TSAS…SSST). Low complexity-rich tracts occupy residues 122–143 (SSTT…TSST) and 157–193 (TSAS…TNVN).

This sequence belongs to the AP2/ERF transcription factor family. ERF subfamily. As to expression, expressed in roots, root hairs and leaves. Expressed in root epidermis and root hairs.

It localises to the nucleus. Its function is as follows. Transcription factor involved in symbiotic nodule signaling in response to rhizobial Nod factors (NFs). Binds to the GCC box (NF-responsive box) of ENOD11 promoter. Acts as a transcriptional activator of NF-responsive box-containing target gene promoters in root hairs. Involved in early stages of root nodule development. Functions redundantly with ERN1. Is essential with ERN1 for the initiation of root hair infection, and nodule organogenesis and development. Required for accurate expression of the NF signaling genes ENOD11 and ENOD12. The protein is Ethylene-responsive transcription factor ERN2 of Medicago truncatula (Barrel medic).